The primary structure comprises 535 residues: NEDD8-activating enzyme E1 regulatory subunit (535 aa).

Residues 332–345 (DMIADSSKFIKLQN) form an interaction with UBA3 region.

It belongs to the ubiquitin-activating E1 family. ULA1 subfamily. Heterodimer of UBA3 and NAE1. The complex binds NEDD8 and UBE2M.

The protein operates within protein modification; protein neddylation. Its function is as follows. Regulatory subunit of the dimeric UBA3-NAE1 E1 enzyme. E1 activates NEDD8 by first adenylating its C-terminal glycine residue with ATP, thereafter linking this residue to the side chain of the catalytic cysteine, yielding a NEDD8-UBA3 thioester and free AMP. E1 finally transfers NEDD8 to the catalytic cysteine of UBE2M. The covalent attachment of NEDD8 to target proteins is known as 'neddylation' and the process is involved in the regulation of cell growth, viability and development. This chain is NEDD8-activating enzyme E1 regulatory subunit (NAE1), found in Gallus gallus (Chicken).